We begin with the raw amino-acid sequence, 114 residues long: Hemerythrin subunit 2 (114 aa).

The Fe cation site is built by histidine 26, histidine 55, glutamate 59, histidine 74, histidine 78, histidine 102, and aspartate 107.

The protein belongs to the hemerythrin family.

Hemerythrin is a respiratory protein in blood cells of certain marine worms. The oxygen-binding site in each chain contains two iron atoms. In Golfingia vulgaris (Marine worm), this protein is Hemerythrin subunit 2.